Reading from the N-terminus, the 231-residue chain is Sugar fermentation stimulation protein homolog (231 aa).

The protein belongs to the SfsA family.

The protein is Sugar fermentation stimulation protein homolog of Geobacter sp. (strain M21).